Here is a 707-residue protein sequence, read N- to C-terminus: Translation initiation factor eIF2B subunit epsilon (707 aa).

2 disordered regions span residues 489 to 526 and 686 to 707; these read HDDI…SVKF and AEEE…DESD. Residues 516–693 enclose the W2 domain; it reads DNPIEPDSVK…KSAEEESDDS (178 aa). Over residues 688–707 the composition is skewed to acidic residues; that stretch reads EESDDSDDSDDDDDDSDESD.

The protein belongs to the eIF-2B gamma/epsilon subunits family. In terms of assembly, component of the translation initiation factor 2B (eIF2B) complex which is a heterodecamer of two sets of five different subunits: alpha, beta, gamma, delta and epsilon. Subunits alpha, beta and delta comprise a regulatory subcomplex and subunits epsilon and gamma comprise a catalytic subcomplex. Within the complex, the hexameric regulatory complex resides at the center, with the two heterodimeric catalytic subcomplexes bound on opposite sides.

The protein localises to the cytoplasm. Its subcellular location is the cytosol. Functionally, acts as a component of the translation initiation factor 2B (eIF2B) complex, which catalyzes the exchange of GDP for GTP on eukaryotic initiation factor 2 (eIF2) gamma subunit. Its guanine nucleotide exchange factor activity is repressed when bound to eIF2 complex phosphorylated on the alpha subunit, thereby limiting the amount of methionyl-initiator methionine tRNA available to the ribosome and consequently global translation is repressed. In Dictyostelium discoideum (Social amoeba), this protein is Translation initiation factor eIF2B subunit epsilon (eif2b5).